Here is a 96-residue protein sequence, read N- to C-terminus: Neutrophil defensin 1 (96 aa).

An N-terminal signal peptide occupies residues 1–19 (MRTLVILAAILLVALQAQA). Positions 20 to 66 (EPLQARTDEATAAQEQIPTDNPEVVVSLAWDESLAPKDSVPGLRKNM) are excised as a propeptide. 3 cysteine pairs are disulfide-bonded: Cys68-Cys96, Cys70-Cys85, and Cys75-Cys95. Tyr87 is modified (phosphotyrosine).

Tetramer. Dimer. Interacts with RETN. In terms of processing, ADP-ribosylation drastically reduces cytotoxic and antibacterial activities, and enhances IL8 production.

It is found in the secreted. Functionally, effector molecule of the innate immune system that acts via antibiotic-like properties against a broad array of infectious agents including bacteria, fungi, and viruses or by promoting the activation and maturation of some APCs. Interacts with the essential precursor of cell wall synthesis lipid II to inhibit bacterial cell wall synthesis. Inhibits adenovirus infection via inhibition of viral disassembly at the vertex region, thereby restricting the release of internal capsid protein pVI, which is required for endosomal membrane penetration during cell entry. In addition, interaction with adenovirus capsid leads to the redirection of viral particles to TLR4 thereby promoting a NLRP3-mediated inflammasome response and interleukin 1-beta (IL-1beta) release. Induces the production of proinflammatory cytokines including type I interferon (IFN) in plasmacytoid dendritic cells (pDCs) by triggering the degradation of NFKBIA and nuclear translocation of IRF1, both of which are required for activation of pDCs. The polypeptide is Neutrophil defensin 1 (Macaca mulatta (Rhesus macaque)).